The primary structure comprises 174 residues: uncharacterized protein (174 aa).

This is an uncharacterized protein from Saccharomyces cerevisiae (strain ATCC 204508 / S288c) (Baker's yeast).